Here is a 369-residue protein sequence, read N- to C-terminus: Transmembrane protein adipocyte-associated 1 (369 aa).

A glycan (N-linked (GlcNAc...) asparagine) is linked at asparagine 20. Helical transmembrane passes span leucine 45–alanine 65, serine 73–alanine 93, phenylalanine 120–glutamate 140, valine 148–isoleucine 168, glutamine 189–proline 209, leucine 237–valine 257, and phenylalanine 262–glycine 282. Asparagine 329 carries an N-linked (GlcNAc...) asparagine glycan.

The protein belongs to the UPF0359 family. In terms of tissue distribution, ubiquitous, with higher levels in heart, brain, lung, liver and kidney.

It localises to the membrane. The sequence is that of Transmembrane protein adipocyte-associated 1 (Tpra1) from Mus musculus (Mouse).